The following is a 484-amino-acid chain: Cysteine desulfurase, mitochondrial (484 aa).

The segment covering L29 to S42 has biased composition (low complexity). The segment at L29–S69 is disordered. Pyridoxal 5'-phosphate contacts are provided by residues A153–T154, N233, Q261, and S281–H283. K284 is modified (N6-(pyridoxal phosphate)lysine). Pyridoxal 5'-phosphate is bound at residue T321. The active-site Cysteine persulfide intermediate is C408. C408 is a binding site for [2Fe-2S] cluster.

This sequence belongs to the class-V pyridoxal-phosphate-dependent aminotransferase family. NifS/IscS subfamily. The cofactor is pyridoxal 5'-phosphate.

It is found in the mitochondrion. The enzyme catalyses (sulfur carrier)-H + L-cysteine = (sulfur carrier)-SH + L-alanine. In terms of biological role, catalyzes the removal of elemental sulfur from cysteine to produce alanine. It supplies the inorganic sulfur for iron-sulfur (Fe-S) clusters. Plays a role in both tRNA-processing and mitochondrial metabolism. Involved in the 2-thio-modification of both 5-carboxymethylaminomethyl-2-thiouridine in mitochondrial tRNAs and 5-methoxycarbonylmethyl-2-thiouridine (mcm5s2U) in cytoplasmic tRNAs. In Candida maltosa (Yeast), this protein is Cysteine desulfurase, mitochondrial.